The following is a 387-amino-acid chain: L-aspartate:5-guanidino-3-methyl-2-oxopentanoate transaminase (387 aa).

Residue Lys237 is modified to N6-(pyridoxal phosphate)lysine.

This sequence belongs to the class-I pyridoxal-phosphate-dependent aminotransferase family. Requires pyridoxal 5'-phosphate as cofactor.

The catalysed reaction is (3R)-5-guanidino-3-methyl-2-oxopentanoate + L-aspartate = (3R)-3-methyl-L-arginine + oxaloacetate. It participates in antibiotic biosynthesis. Its function is as follows. Aminotransferase involved in the formation of the rare amino acid 3-methylarginine (MeArg), which is used as a potent antibiotic against the closely related soybean pathogen P.syringae pv. glycinea. Probably catalyzes transamination from the donor L-aspartate to 5-guanidino-3-methyl-2-oxopentanoic acid, generating 3-methylarginine. The protein is L-aspartate:5-guanidino-3-methyl-2-oxopentanoate transaminase of Pseudomonas syringae pv. syringae.